Consider the following 849-residue polypeptide: Dopamine receptor 2 (849 aa).

The Extracellular portion of the chain corresponds to 1–39 (MEAGETWNVSLEWPPPSLDLSTITQTPSTIVGSGIPLNY). Asparagine 8 is a glycosylation site (N-linked (GlcNAc...) asparagine). A helical membrane pass occupies residues 40–60 (AGLSLIVIPLITLLGNLLVII). Residues 61–70 (SVLRYRALQS) are Cytoplasmic-facing. Residues 71–91 (AINFLILGLAVADLLVAIIVM) traverse the membrane as a helical segment. Residues 92 to 112 (PYAVYVYVTNGDWYLGNLMCD) lie on the Extracellular side of the membrane. A disulfide bridge connects residues cysteine 111 and cysteine 190. Residues 113-133 (IYMASDVCCSTASILLLAVIS) form a helical membrane-spanning segment. Residues 134 to 155 (FDRYRAVSLPIQYSRQSQNVKR) are Cytoplasmic-facing. Residues 156–176 (VWTLIAVIWLVSLTLASPMVF) form a helical membrane-spanning segment. Over 177-203 (GVNVRPPDANPYECRFYNAEFSILSSM) the chain is Extracellular. Residues 183–849 (PDANPYECRF…HHFSNKQAHV (667 aa)) are required for the interaction with gpa-14. The helical transmembrane segment at 204–224 (ISFVIPCFLVLFVYIRIIIAL) threads the bilayer. The Cytoplasmic segment spans residues 225-759 (KKREKAAKMR…QRKEKRATKT (535 aa)). A disordered region spans residues 450 to 515 (RRSSYADDSQ…NNSRTASITN (66 aa)). Residues 457-470 (DSQPTSSQTSSGDG) show a composition bias toward low complexity. Residues 477–498 (GQKRFRNLSRNYSTKHHRKVVK) are compositionally biased toward basic residues. Over residues 501–515 (RGNSRNNSRTASITN) the composition is skewed to polar residues. Residues 760-780 (LGVVVGVFLVCWVPFFVINIL) traverse the membrane as a helical segment. Topologically, residues 781-798 (NAVCILLNKDSCQVGYDL) are extracellular. A helical membrane pass occupies residues 799 to 819 (FFYCTWIGYMNSFMNPIIYTI). Topologically, residues 820–849 (FNTEFRRAFKSIIFGRNSTRHHFSNKQAHV) are cytoplasmic.

Belongs to the G-protein coupled receptor 1 family. In terms of assembly, interacts (via C-terminus) with the G-alpha protein gpa-14; the interaction is direct. As to expression, expressed in all dopaminergic neurons. Expressed in neurons around the nerve ring and the posterior side of the body including PDE neurons. In hermaphrodites, expressed in the head and tail ganglia including in the RIA interneuron pair, and in a subset of sublateral interneurons and the PDA neuron in the tail. Expressed in cholinergic SIA neurons. Also expressed in the male tail. In males, expressed in the dorsal spicule protractor, ventral spicule protractor, dorsal spicule retractor and ventral spicule retractor muscles and the sensory post-cloacal sensilla B (PCB) neuron. In males, expressed in the sensory hook neurons HOA.

Its subcellular location is the cell membrane. Functionally, G-protein coupled receptor which binds to the neurotransmitter dopamine with high affinity leading to the activation of an associated G-protein and downstream signaling pathways. Couples to G-proteins to inhibit adenylate cyclase (AC) activity and cAMP production. Inhibits synaptic vesicle fusion to negatively regulate the release of dopamine at dopaminergic neuron synapses. Antagonizes octopamine signaling in response to food by promoting the dopamine-mediated suppression of crh-1/CREB1 transcription factor activation in cholinergic SIA neurons. This is most likely in association with the G(o)-alpha G-protein subunit goa-1. In association with the G-alpha protein gpa-14, modulates two types of learning behavior: touch habituation and chemosensory associative conditioning. May act partly via tsp-17 to negatively regulate dopamine reuptake transporter dat-1 activity. Plays a role in behavioral plasticity and regulates the decision-making process when conflicting alternatives are present. Promotes male mating behavior by antagonizing acetylcholine signaling to control the protrusions of copulatory spicules from the tail of males during hermaphrodite vulval location. Modulates unc-7 activity at gap junctions to promote inhibitory neuronal signaling transduction between chemosensory and mechanosensory neurons, and thus ensures spicule insertion attempts are confined to the hermaphrodite vulva during copulation. G-protein coupled receptor which binds to the neurotransmitter dopamine with high affinity leading to the activation of an associated G-protein and downstream signaling pathways. Couples to G-proteins to inhibit adenylate cyclase (AC) activity and cAMP production. The sequence is that of Dopamine receptor 2 from Caenorhabditis elegans.